The following is a 54-amino-acid chain: Light-harvesting protein B-870 beta chain (54 aa).

Topologically, residues 1 to 20 are cytoplasmic; that stretch reads EVKQESLSGITEGEAKEFHK. A bacteriochlorophyll is bound by residues His19 and His37. The chain crosses the membrane as a helical span at residues 21–43; that stretch reads IFTSSILVFFGVAAFAHLLVWIW. The Periplasmic portion of the chain corresponds to 44-54; sequence RPWVPGPNGYS.

Belongs to the antenna complex beta subunit family. The core complex is formed by different alpha and beta chains, binding bacteriochlorophyll molecules, and arranged most probably in tetrameric structures disposed around the reaction center. The non-pigmented gamma chains may constitute additional components.

It localises to the cell inner membrane. Its function is as follows. Antenna complexes are light-harvesting systems, which transfer the excitation energy to the reaction centers. The chain is Light-harvesting protein B-870 beta chain from Rhodospirillum rubrum.